Here is a 203-residue protein sequence, read N- to C-terminus: A-type ATP synthase subunit E (203 aa).

Belongs to the V-ATPase E subunit family. Has multiple subunits with at least A(3), B(3), C, D, E, F, H, I and proteolipid K(x).

The protein localises to the cell membrane. Component of the A-type ATP synthase that produces ATP from ADP in the presence of a proton gradient across the membrane. The protein is A-type ATP synthase subunit E of Methanococcus maripaludis (strain DSM 14266 / JCM 13030 / NBRC 101832 / S2 / LL).